The chain runs to 356 residues: Outer membrane protein Omp38 (356 aa).

A signal peptide spans 1-19; that stretch reads MKLSRIALATMLVAAPLAA. Positions 221–339 constitute an OmpA-like domain; sequence ELTEDLNMEL…RVFATITGSR (119 aa).

The protein belongs to the outer membrane OOP (TC 1.B.6) superfamily. Homotrimer.

The protein localises to the cell outer membrane. Functionally, porin. Induces apoptosis in human cells through caspases-dependent and AIF-dependent pathways. Purified Omp38 enters the cells and localizes to the mitochondria, which leads to a release of proapoptotic molecules such as cytochrome c and AIF (apoptosis-inducing factor). The chain is Outer membrane protein Omp38 (omp38) from Acinetobacter baumannii (strain ATCC 17978 / DSM 105126 / CIP 53.77 / LMG 1025 / NCDC KC755 / 5377).